A 133-amino-acid chain; its full sequence is Thioredoxin-like protein CXXS1 (133 aa).

The 120-residue stretch at 1–120 folds into the Thioredoxin domain; sequence MEIQQQKGVG…VKKMVDASAE (120 aa).

Belongs to the thioredoxin family.

This chain is Thioredoxin-like protein CXXS1, found in Oryza sativa subsp. japonica (Rice).